A 294-amino-acid polypeptide reads, in one-letter code: MASVQLRNVTKAWGDVVVSKDINLEIQDGEFVVFVGPSGCGKSTLLRMIAGLETVTSGDLFIGDTRMNDVPPAERGIGMVFQSYALYPHLSVAENMSFGLKLAGAKKEVINQRVTQVAEVLQLAHLLERNRKALSGGQRPGVAIRTLVAEPRVFLLDEPLSNLDAALRVQMRIEISRLHKRLGRTMIYVTHDQVEAMTLADKIVVLDAGRVAQVGKPLELYHYPADRFVAGFIGSPKMNFLPVKVTATAIEQVQVELPNRQQVWLPVDSAHVQVGANMSLGIRPEHLLPSDIAD.

Residues 4-233 (VQLRNVTKAW…PADRFVAGFI (230 aa)) form the ABC transporter domain. 36–43 (GPSGCGKS) contributes to the ATP binding site.

It belongs to the ABC transporter superfamily. Maltooligosaccharide importer (TC 3.A.1.1.1) family. The complex is composed of two ATP-binding proteins (MalK), two transmembrane proteins (MalG and MalK) and a solute-binding protein (MalE).

It is found in the cell inner membrane. It carries out the reaction D-maltose(out) + ATP + H2O = D-maltose(in) + ADP + phosphate + H(+). In terms of biological role, part of the ABC transporter complex MalEFGK involved in maltose/maltodextrin import. Responsible for energy coupling to the transport system. This is Maltose/maltodextrin import ATP-binding protein MalK from Klebsiella aerogenes (Enterobacter aerogenes).